A 958-amino-acid polypeptide reads, in one-letter code: Glycine dehydrogenase (decarboxylating) (958 aa).

Residue Lys705 is modified to N6-(pyridoxal phosphate)lysine.

It belongs to the GcvP family. The glycine cleavage system is composed of four proteins: P, T, L and H. It depends on pyridoxal 5'-phosphate as a cofactor.

The enzyme catalyses N(6)-[(R)-lipoyl]-L-lysyl-[glycine-cleavage complex H protein] + glycine + H(+) = N(6)-[(R)-S(8)-aminomethyldihydrolipoyl]-L-lysyl-[glycine-cleavage complex H protein] + CO2. The glycine cleavage system catalyzes the degradation of glycine. The P protein binds the alpha-amino group of glycine through its pyridoxal phosphate cofactor; CO(2) is released and the remaining methylamine moiety is then transferred to the lipoamide cofactor of the H protein. This Synechococcus sp. (strain CC9902) protein is Glycine dehydrogenase (decarboxylating).